A 368-amino-acid chain; its full sequence is Glutamate 5-kinase (368 aa).

Position 10 (Lys10) interacts with ATP. Positions 50, 137, and 149 each coordinate substrate. 169–170 (TD) is a binding site for ATP. A PUA domain is found at 276-354 (RGTLVLDDGA…ESIVRELGYM (79 aa)).

The protein belongs to the glutamate 5-kinase family.

The protein resides in the cytoplasm. The catalysed reaction is L-glutamate + ATP = L-glutamyl 5-phosphate + ADP. Its pathway is amino-acid biosynthesis; L-proline biosynthesis; L-glutamate 5-semialdehyde from L-glutamate: step 1/2. In terms of biological role, catalyzes the transfer of a phosphate group to glutamate to form L-glutamate 5-phosphate. The protein is Glutamate 5-kinase of Pseudomonas savastanoi pv. phaseolicola (strain 1448A / Race 6) (Pseudomonas syringae pv. phaseolicola (strain 1448A / Race 6)).